A 393-amino-acid chain; its full sequence is NAD(P)H-quinone oxidoreductase subunit H, chloroplastic (393 aa).

This sequence belongs to the complex I 49 kDa subunit family. As to quaternary structure, NDH is composed of at least 16 different subunits, 5 of which are encoded in the nucleus.

The protein localises to the plastid. Its subcellular location is the chloroplast thylakoid membrane. The enzyme catalyses a plastoquinone + NADH + (n+1) H(+)(in) = a plastoquinol + NAD(+) + n H(+)(out). It carries out the reaction a plastoquinone + NADPH + (n+1) H(+)(in) = a plastoquinol + NADP(+) + n H(+)(out). In terms of biological role, NDH shuttles electrons from NAD(P)H:plastoquinone, via FMN and iron-sulfur (Fe-S) centers, to quinones in the photosynthetic chain and possibly in a chloroplast respiratory chain. The immediate electron acceptor for the enzyme in this species is believed to be plastoquinone. Couples the redox reaction to proton translocation, and thus conserves the redox energy in a proton gradient. The sequence is that of NAD(P)H-quinone oxidoreductase subunit H, chloroplastic from Acorus calamus var. americanus (American sweet flag).